Consider the following 676-residue polypeptide: Translation initiation factor IF-2, mitochondrial (676 aa).

Residues 143 to 326 enclose the tr-type G domain; the sequence is KRAPVVTIMG…MDIRAENSPK (184 aa). The G1 stretch occupies residues 152 to 159; sequence GHVDHGKT. Residue 152–159 participates in GTP binding; sequence GHVDHGKT. The G2 stretch occupies residues 177–181; it reads GITQH. GTP contacts are provided by residues 200-203 and 254-257; these read DTPG and TKID. The segment at 200-203 is G3; sequence DTPG. The segment at 254-257 is G4; that stretch reads TKID. Residues 296–298 form a G5 region; sequence SAK.

This sequence belongs to the TRAFAC class translation factor GTPase superfamily. Classic translation factor GTPase family. IF-2 subfamily.

It localises to the mitochondrion. Functionally, one of the essential components for the initiation of protein synthesis. Protects formylmethionyl-tRNA from spontaneous hydrolysis and promotes its binding to the 30S ribosomal subunits. Also involved in the hydrolysis of GTP during the formation of the 70S ribosomal complex. This is Translation initiation factor IF-2, mitochondrial (IFM1) from Saccharomyces cerevisiae (strain ATCC 204508 / S288c) (Baker's yeast).